The primary structure comprises 192 residues: UPF0149 protein KPN78578_32810 (192 aa).

It belongs to the UPF0149 family.

This Klebsiella pneumoniae subsp. pneumoniae (strain ATCC 700721 / MGH 78578) protein is UPF0149 protein KPN78578_32810.